Reading from the N-terminus, the 42-residue chain is Large ribosomal subunit protein bL36 (42 aa).

Belongs to the bacterial ribosomal protein bL36 family.

The sequence is that of Large ribosomal subunit protein bL36 from Anaplasma marginale (strain St. Maries).